The chain runs to 275 residues: Ribosomal RNA small subunit methyltransferase A (275 aa).

S-adenosyl-L-methionine contacts are provided by N15, L17, G42, E63, D88, and N111.

The protein belongs to the class I-like SAM-binding methyltransferase superfamily. rRNA adenine N(6)-methyltransferase family. RsmA subfamily.

The protein localises to the cytoplasm. The catalysed reaction is adenosine(1518)/adenosine(1519) in 16S rRNA + 4 S-adenosyl-L-methionine = N(6)-dimethyladenosine(1518)/N(6)-dimethyladenosine(1519) in 16S rRNA + 4 S-adenosyl-L-homocysteine + 4 H(+). Specifically dimethylates two adjacent adenosines (A1518 and A1519) in the loop of a conserved hairpin near the 3'-end of 16S rRNA in the 30S particle. May play a critical role in biogenesis of 30S subunits. This is Ribosomal RNA small subunit methyltransferase A from Geobacter metallireducens (strain ATCC 53774 / DSM 7210 / GS-15).